Here is a 401-residue protein sequence, read N- to C-terminus: Serine--glyoxylate aminotransferase (401 aa).

M1 bears the N-acetylmethionine mark. Pyridoxal 5'-phosphate contacts are provided by residues 68–70, T148, and 200–201; these read TGT and QK. K201 lines the 3-hydroxypyruvate pocket. K201 bears the N6-(pyridoxal phosphate)lysine mark. Phosphoserine is present on S204. Position 347 (R347) interacts with 3-hydroxypyruvate. Residues 399–401 carry the Microbody targeting signal motif; that stretch reads SRI.

The protein belongs to the class-V pyridoxal-phosphate-dependent aminotransferase family. As to quaternary structure, forms homodimers. Interacts with RABGAP22. Pyridoxal 5'-phosphate serves as cofactor. As to expression, widely expressed. Preferentially expressed in green, leafy tissues, root cortex and epidermis, developing siliques and dry seeds.

It localises to the peroxisome. The enzyme catalyses glyoxylate + L-serine = 3-hydroxypyruvate + glycine. The catalysed reaction is glyoxylate + L-alanine = glycine + pyruvate. It catalyses the reaction L-serine + pyruvate = 3-hydroxypyruvate + L-alanine. It carries out the reaction 3-hydroxypyruvate + L-asparagine = 2-oxosuccinamate + L-serine. The enzyme catalyses L-asparagine + glyoxylate = 2-oxosuccinamate + glycine. The catalysed reaction is L-asparagine + pyruvate = 2-oxosuccinamate + L-alanine. Inhibited by aminooxyacetate and beta-chloro-L-alanine, but not by p-hydroxymercuribenzoate. Photorespiratory enzyme that catalyzes transamination reactions with multiple substrates, including asparagine. Functions exclusively as a catabolic enzyme in Asn metabolism. Involved in root development during seedling establishment after seed germination by regulating serine homeostasis and acetate conversion. The protein is Serine--glyoxylate aminotransferase of Arabidopsis thaliana (Mouse-ear cress).